The chain runs to 140 residues: Ribonucleases P/MRP protein subunit POP7 (140 aa).

The tract at residues 1 to 21 (MALKKNTHNKSTKRVTKHPSL) is disordered. At serine 115 the chain carries Phosphoserine.

This sequence belongs to the histone-like Alba family. As to quaternary structure, component of nuclear RNase P and RNase MRP complexes. RNase P consists of an RNA moiety and at least 9 protein subunits including POP1, POP3, POP4, POP5, POP6, POP7, POP8, RPP1 and RPR2. RNase MRP complex consists of an RNA moiety and at least 10 protein subunits including POP1, POP3, POP4, POP5, POP6, POP7, POP8, RMP1, RPP1 and SNM1, many of which are shared with the RNase P complex.

It is found in the nucleus. The enzyme catalyses Endonucleolytic cleavage of RNA, removing 5'-extranucleotides from tRNA precursor.. Its function is as follows. Component of ribonuclease P, a protein complex that generates mature tRNA molecules by cleaving their 5'-ends. Also a component of RNase MRP, which cleaves pre-rRNA sequences. In Saccharomyces cerevisiae (strain ATCC 204508 / S288c) (Baker's yeast), this protein is Ribonucleases P/MRP protein subunit POP7 (POP7).